The chain runs to 1010 residues: Regulator of telomere elongation helicase 1 homolog (1010 aa).

Residues 7 to 333 form the Helicase ATP-binding domain; it reads NGITVNFPFE…KEMLLQLEKT (327 aa). 42 to 49 provides a ligand contact to ATP; sequence SPTGTGKT. [4Fe-4S] cluster is bound by residues cysteine 157, cysteine 175, cysteine 184, and cysteine 220. Positions 263–266 match the DEAH box motif; sequence DEAH. The tract at residues 912-931 is disordered; it reads TSDDEDPGRTGDDPTRQAPE. Residues 918-931 show a composition bias toward basic and acidic residues; sequence PGRTGDDPTRQAPE.

Belongs to the helicase family. RAD3/XPD subfamily.

It is found in the nucleus. It carries out the reaction ATP + H2O = ADP + phosphate + H(+). In terms of biological role, a probable ATP-dependent DNA helicase implicated in DNA repair and the maintenance of genomic stability. Acts as an anti-recombinase to counteract toxic recombination and limit crossover during meiosis. Regulates meiotic recombination and crossover homeostasis by physically dissociating strand invasion events and thereby promotes noncrossover repair by meiotic synthesis dependent strand annealing (SDSA) as well as disassembly of D loop recombination intermediates. The chain is Regulator of telomere elongation helicase 1 homolog from Aedes aegypti (Yellowfever mosquito).